The following is a 446-amino-acid chain: MKEKLTHAESLTISSMLFGLFFGAGNLIFPAYLGEASGANLWISLLGFLITGVGLPLLAIASLGMTRSEGLLDLSGRVSHKYSYFFTCLLYLTIGPFFAIPRSFTVPFETGISALLPSGMAKSTGLFIFSLIFFAIMLFFSLRPGQIMDWIGKFLTPAFLLFFFFIMIMALLHPLGNYHAVKPVGEYASAPLISGVLAGYNTMDALAGLAFGIIVISSIRTFGVTKPEKVASATLKTGVLTCLLMAVIYAITALVGAQSRTALGLAANGGEALSQIARHYFPGLGAVIFALMIFVACLKTAIGLITACSETFAEMFPKTLSYNMWAIIFSLLAFGIANVGLTTIISFSLPVLMLLYPLAISLILLALTSKLFDFKQVDYQIMTAVTFLCALGDFFKALPAGMQVKAVTGLYGHVLPLYQDGLGWLVPVTVIFAILAIKGVISKKRA.

The next 12 membrane-spanning stretches (helical) occupy residues 13–33 (ISSM…PAYL), 41–61 (LWIS…LAIA), 81–101 (KYSY…FAIP), 120–140 (MAKS…MLFF), 154–174 (FLTP…LLHP), 196–216 (VLAG…IIVI), 237–257 (TGVL…LVGA), 285–305 (GAVI…IGLI), 325–345 (WAII…TTII), 347–367 (FSLP…LLAL), 381–401 (IMTA…LPAG), and 421–441 (GLGW…KGVI).

Belongs to the branched chain amino acid transporter family.

It localises to the cell membrane. Leucine uptake is inhibited by the proton ionophore carbonyl cyanide m-chlorophenylhydrazone (CCCP). Branched chain amino acid transport system which is involved in the uptake of leucine, valine and isoleucine. The proton motive force is probably the driving force for transport. The chain is Branched-chain amino acid permease BrnQ from Lactobacillus delbrueckii subsp. lactis.